The sequence spans 355 residues: 3-dehydroquinate synthase (355 aa).

NAD(+) contacts are provided by residues 71–76 (EGEASK), 105–109 (GVVGD), 129–130 (TS), lysine 142, lysine 151, and 169–172 (TLKT). The Zn(2+) site is built by glutamate 184, histidine 246, and histidine 263.

The protein belongs to the sugar phosphate cyclases superfamily. Dehydroquinate synthase family. Co(2+) serves as cofactor. It depends on Zn(2+) as a cofactor. NAD(+) is required as a cofactor.

Its subcellular location is the cytoplasm. It catalyses the reaction 7-phospho-2-dehydro-3-deoxy-D-arabino-heptonate = 3-dehydroquinate + phosphate. Its pathway is metabolic intermediate biosynthesis; chorismate biosynthesis; chorismate from D-erythrose 4-phosphate and phosphoenolpyruvate: step 2/7. Its function is as follows. Catalyzes the conversion of 3-deoxy-D-arabino-heptulosonate 7-phosphate (DAHP) to dehydroquinate (DHQ). The sequence is that of 3-dehydroquinate synthase from Streptococcus suis (strain 98HAH33).